Reading from the N-terminus, the 125-residue chain is RxLR effector protein Avh6 (125 aa).

Positions 1-25 are cleaved as a signal peptide; the sequence is MRLSSTTFVVLAAVLLASGTAVSKA. The RxLR-dEER signature appears at 48 to 70; that stretch reads RFLRSHHTEDGKAKLSNYDNEER.

It belongs to the RxLR effector family.

The protein resides in the secreted. The protein localises to the host cell. Its function is as follows. Effector that suppresses plant defense responses during the early stages of pathogen infection. Suppresses cell death induced by effectors and PAMPs in plant hosts. Triggers a hypersensitive response (HR) in the presence of Rps1d. Suppresses BAX-induced cell death and enhanced P.capsici infection in Nicotiana benthamiana. Also suppresses effector-triggered immunity induction by associating with Avr1b and Rps1b, suggesting a role in suppressing plant immunity. This chain is RxLR effector protein Avh6, found in Phytophthora sojae (Soybean stem and root rot agent).